The sequence spans 487 residues: Betaine aldehyde dehydrogenase (487 aa).

K(+) contacts are provided by Ser-26 and Asp-93. Residue 150 to 152 (GAW) participates in NAD(+) binding. Lys-162 (charge relay system) is an active-site residue. Residues 176 to 179 (KPSE) and 229 to 232 (SVPT) contribute to the NAD(+) site. Leu-244 contacts K(+). The active-site Proton acceptor is the Glu-250. Gly-252, Cys-284, and Glu-384 together coordinate NAD(+). The active-site Nucleophile is the Cys-284. Cys-284 is modified (cysteine sulfenic acid (-SOH)). K(+) contacts are provided by Lys-454 and Gly-457. The active-site Charge relay system is Glu-461.

The protein belongs to the aldehyde dehydrogenase family. Dimer of dimers. It depends on K(+) as a cofactor.

The catalysed reaction is betaine aldehyde + NAD(+) + H2O = glycine betaine + NADH + 2 H(+). The protein operates within amine and polyamine biosynthesis; betaine biosynthesis via choline pathway; betaine from betaine aldehyde: step 1/1. Its function is as follows. Involved in the biosynthesis of the osmoprotectant glycine betaine. Catalyzes the irreversible oxidation of betaine aldehyde to the corresponding acid. The chain is Betaine aldehyde dehydrogenase from Rhizobium leguminosarum bv. trifolii (strain WSM2304).